Reading from the N-terminus, the 424-residue chain is Serpin-Z2A (424 aa).

Residues 370–394 are RCL; the sequence is GTEAAASTACTIRLLSMSYPEDFVA.

The protein belongs to the serpin family.

In terms of biological role, probable serine protease inhibitor. The protein is Serpin-Z2A of Oryza sativa subsp. japonica (Rice).